Consider the following 449-residue polypeptide: CCA-adding enzyme (449 aa).

Ser57 and Arg60 together coordinate ATP. CTP-binding residues include Ser57 and Arg60. 3 residues coordinate Mg(2+): Asp69, Asp71, and Asp124. ATP-binding residues include His147, Lys167, and Tyr176. His147, Lys167, and Tyr176 together coordinate CTP.

The protein belongs to the tRNA nucleotidyltransferase/poly(A) polymerase family. Archaeal CCA-adding enzyme subfamily. Homodimer. Requires Mg(2+) as cofactor.

It catalyses the reaction a tRNA precursor + 2 CTP + ATP = a tRNA with a 3' CCA end + 3 diphosphate. The enzyme catalyses a tRNA with a 3' CCA end + 2 CTP + ATP = a tRNA with a 3' CCACCA end + 3 diphosphate. Catalyzes the addition and repair of the essential 3'-terminal CCA sequence in tRNAs without using a nucleic acid template. Adds these three nucleotides in the order of C, C, and A to the tRNA nucleotide-73, using CTP and ATP as substrates and producing inorganic pyrophosphate. tRNA 3'-terminal CCA addition is required both for tRNA processing and repair. Also involved in tRNA surveillance by mediating tandem CCA addition to generate a CCACCA at the 3' terminus of unstable tRNAs. While stable tRNAs receive only 3'-terminal CCA, unstable tRNAs are marked with CCACCA and rapidly degraded. In Methanocaldococcus jannaschii (strain ATCC 43067 / DSM 2661 / JAL-1 / JCM 10045 / NBRC 100440) (Methanococcus jannaschii), this protein is CCA-adding enzyme.